The chain runs to 177 residues: Transcriptional repressor NrdR (177 aa).

The segment at Cys-3 to Cys-34 is a zinc-finger region. Residues Val-49 to Asp-139 form the ATP-cone domain. Residues Ser-148–Pro-177 form a disordered region.

The protein belongs to the NrdR family. It depends on Zn(2+) as a cofactor.

Negatively regulates transcription of bacterial ribonucleotide reductase nrd genes and operons by binding to NrdR-boxes. The polypeptide is Transcriptional repressor NrdR (Methylobacterium radiotolerans (strain ATCC 27329 / DSM 1819 / JCM 2831 / NBRC 15690 / NCIMB 10815 / 0-1)).